The chain runs to 1093 residues: GPI ethanolamine phosphate transferase 3, catalytic subunit (1093 aa).

The chain crosses the membrane as a helical span at residues 4–24; it reads VSVLLFLAWVCFLFYAGIALF. Asn268 is a glycosylation site (N-linked (GlcNAc...) asparagine). A run of 9 helical transmembrane segments spans residues 460 to 480, 483 to 503, 512 to 532, 669 to 689, 702 to 722, 748 to 768, 831 to 851, 856 to 876, and 945 to 965; these read AAAC…GFLF, LLLI…GVSV, VVLG…KAWV, LWYG…RLWL, VLFV…YWAL, VMGL…TVLV, SVYS…LMLL, VSLV…LLAA, and FASH…PFLC. Residues 971–991 are disordered; the sequence is KRRQPLPGSESEARVRPEEEE. 2 helical membrane-spanning segments follow: residues 1018–1038 and 1052–1072; these read LKYL…ASIL and FIFE…GIAL.

This sequence belongs to the PIGG/PIGN/PIGO family. PIGO subfamily. In terms of assembly, forms the ethanolamine phosphate transferase 3 complex composed by PIGO and PIGF. PIGF is required to stabilize PIGO.

It is found in the endoplasmic reticulum membrane. Its pathway is glycolipid biosynthesis; glycosylphosphatidylinositol-anchor biosynthesis. Its function is as follows. Catalytic subunit of the ethanolamine phosphate transferase 3 complex that transfers an ethanolamine phosphate (EtNP) from a phosphatidylethanolamine (PE) to the 6-OH position of the third alpha-1,2-linked mannose of the an alpha-D-Man-(1-&gt;2)-alpha-D-Man-(1-&gt;6)-2-PEtn-alpha-D-Man-(1-&gt;4)-alpha-D-GlcN-(1-&gt;6)-(1-radyl,2-acyl-sn-glycero-3-phospho)-2-acyl-inositol (also termed H6) intermediate to generate a 6-PEtn-alpha-D-Man-(1-&gt;2)-alpha-D-Man-(1-&gt;6)-2-PEtn-alpha-D-Man-(1-&gt;4)-alpha-D-GlcN-(1-&gt;6)-(1-radyl,2-acyl-sn-glycero-3-phospho)-2-acyl-inositol (also termed H7) and participates in the tenth step of the glycosylphosphatidylinositol-anchor biosynthesis. This Mus musculus (Mouse) protein is GPI ethanolamine phosphate transferase 3, catalytic subunit.